Here is a 505-residue protein sequence, read N- to C-terminus: Cobyric acid synthase (505 aa).

Positions 260-453 (RIAVAAIYFP…FHGIIDEPEV (194 aa)) constitute a GATase cobBQ-type domain. The active-site Nucleophile is Cys-341. His-445 is an active-site residue.

Belongs to the CobB/CobQ family. CobQ subfamily.

It participates in cofactor biosynthesis; adenosylcobalamin biosynthesis. Functionally, catalyzes amidations at positions B, D, E, and G on adenosylcobyrinic A,C-diamide. NH(2) groups are provided by glutamine, and one molecule of ATP is hydrogenolyzed for each amidation. This chain is Cobyric acid synthase, found in Chlorobium phaeobacteroides (strain DSM 266 / SMG 266 / 2430).